The chain runs to 58 residues: uncharacterized protein (58 aa).

Disordered stretches follow at residues 1-20 and 38-58; these read MKKN…MNKK and IIET…KKQQ.

This is an uncharacterized protein from Bacillus subtilis (strain 168).